The sequence spans 210 residues: HTH-type transcriptional repressor FabR (210 aa).

The HTH tetR-type domain occupies 10–70 (KTRRSLVEAA…TMVDESGLML (61 aa)). Residues 33–52 (SLREVAREAGIAPTSFYRHF) constitute a DNA-binding region (H-T-H motif).

In terms of assembly, homodimer.

It is found in the cytoplasm. In terms of biological role, represses the transcription of fabB, involved in unsaturated fatty acid (UFA) biosynthesis. By controlling UFA production, FabR directly influences the physical properties of the membrane bilayer. The polypeptide is HTH-type transcriptional repressor FabR (Citrobacter koseri (strain ATCC BAA-895 / CDC 4225-83 / SGSC4696)).